We begin with the raw amino-acid sequence, 253 residues long: Ditrans,polycis-undecaprenyl-diphosphate synthase ((2E,6E)-farnesyl-diphosphate specific) (253 aa).

Aspartate 25 is an active-site residue. Residue aspartate 25 coordinates Mg(2+). Substrate is bound by residues 26-29 (GNGR), tryptophan 30, arginine 38, histidine 42, and 70-72 (SSE). Asparagine 73 functions as the Proton acceptor in the catalytic mechanism. Residues tryptophan 74, arginine 76, and arginine 193 each coordinate substrate. Histidine 198 is a binding site for Mg(2+). Substrate is bound at residue 199–201 (RIS). Glutamate 212 is a Mg(2+) binding site.

The protein belongs to the UPP synthase family. As to quaternary structure, homodimer. It depends on Mg(2+) as a cofactor.

The catalysed reaction is 8 isopentenyl diphosphate + (2E,6E)-farnesyl diphosphate = di-trans,octa-cis-undecaprenyl diphosphate + 8 diphosphate. Functionally, catalyzes the sequential condensation of isopentenyl diphosphate (IPP) with (2E,6E)-farnesyl diphosphate (E,E-FPP) to yield (2Z,6Z,10Z,14Z,18Z,22Z,26Z,30Z,34E,38E)-undecaprenyl diphosphate (di-trans,octa-cis-UPP). UPP is the precursor of glycosyl carrier lipid in the biosynthesis of bacterial cell wall polysaccharide components such as peptidoglycan and lipopolysaccharide. The sequence is that of Ditrans,polycis-undecaprenyl-diphosphate synthase ((2E,6E)-farnesyl-diphosphate specific) from Pectobacterium atrosepticum (strain SCRI 1043 / ATCC BAA-672) (Erwinia carotovora subsp. atroseptica).